The primary structure comprises 505 residues: Glycerol kinase (505 aa).

Threonine 12 is an ADP binding site. The ATP site is built by threonine 12, threonine 13, and serine 14. Threonine 12 is a sn-glycerol 3-phosphate binding site. Arginine 16 is an ADP binding site. 4 residues coordinate sn-glycerol 3-phosphate: arginine 82, glutamate 83, tyrosine 134, and aspartate 246. Residues arginine 82, glutamate 83, tyrosine 134, aspartate 246, and glutamine 247 each contribute to the glycerol site. ADP is bound by residues threonine 268 and glycine 312. The ATP site is built by threonine 268, glycine 312, glutamine 316, and glycine 413. ADP contacts are provided by glycine 413 and asparagine 417.

The protein belongs to the FGGY kinase family.

It carries out the reaction glycerol + ATP = sn-glycerol 3-phosphate + ADP + H(+). It functions in the pathway polyol metabolism; glycerol degradation via glycerol kinase pathway; sn-glycerol 3-phosphate from glycerol: step 1/1. With respect to regulation, inhibited by fructose 1,6-bisphosphate (FBP). Key enzyme in the regulation of glycerol uptake and metabolism. Catalyzes the phosphorylation of glycerol to yield sn-glycerol 3-phosphate. The protein is Glycerol kinase of Beutenbergia cavernae (strain ATCC BAA-8 / DSM 12333 / CCUG 43141 / JCM 11478 / NBRC 16432 / NCIMB 13614 / HKI 0122).